We begin with the raw amino-acid sequence, 317 residues long: Serpentine receptor class delta-47 (317 aa).

Transmembrane regions (helical) follow at residues 8–28 (IFYP…FVVV), 42–62 (VLFC…LLQL), 89–109 (CLYF…LLTI), 128–148 (IVII…IYSV), 185–205 (YLII…GLYT), 239–259 (ACLP…VIGT), and 270–290 (ISVL…YSVA).

Belongs to the nematode receptor-like protein srd family.

It is found in the membrane. This is Serpentine receptor class delta-47 (srd-47) from Caenorhabditis elegans.